Consider the following 90-residue polypeptide: Acylphosphatase (90 aa).

The region spanning 4–90 (TRRVRFYGRV…TEFQDFQIKR (87 aa)) is the Acylphosphatase-like domain. Catalysis depends on residues Arg-19 and Asn-37.

Belongs to the acylphosphatase family.

The enzyme catalyses an acyl phosphate + H2O = a carboxylate + phosphate + H(+). This is Acylphosphatase (acyP) from Thermoplasma volcanium (strain ATCC 51530 / DSM 4299 / JCM 9571 / NBRC 15438 / GSS1).